We begin with the raw amino-acid sequence, 691 residues long: Elongation factor G (691 aa).

The tr-type G domain occupies 8 to 282 (ERVRNIGIAA…AVVDYLPAPV (275 aa)). GTP-binding positions include 17-24 (AHIDAGKT), 81-85 (DTPGH), and 135-138 (NKMD).

Belongs to the TRAFAC class translation factor GTPase superfamily. Classic translation factor GTPase family. EF-G/EF-2 subfamily.

Its subcellular location is the cytoplasm. Functionally, catalyzes the GTP-dependent ribosomal translocation step during translation elongation. During this step, the ribosome changes from the pre-translocational (PRE) to the post-translocational (POST) state as the newly formed A-site-bound peptidyl-tRNA and P-site-bound deacylated tRNA move to the P and E sites, respectively. Catalyzes the coordinated movement of the two tRNA molecules, the mRNA and conformational changes in the ribosome. This Prochlorococcus marinus (strain AS9601) protein is Elongation factor G.